Consider the following 312-residue polypeptide: Ornithine carbamoyltransferase (312 aa).

Residues 57–60 (STRT), glutamine 84, arginine 108, and 135–138 (HPCQ) each bind carbamoyl phosphate. Residues asparagine 166, aspartate 226, and 230 to 231 (SM) contribute to the L-ornithine site. Carbamoyl phosphate-binding positions include 265–266 (CL) and arginine 293.

It belongs to the aspartate/ornithine carbamoyltransferase superfamily. OTCase family.

The protein resides in the cytoplasm. It carries out the reaction carbamoyl phosphate + L-ornithine = L-citrulline + phosphate + H(+). It participates in amino-acid biosynthesis; L-arginine biosynthesis; L-arginine from L-ornithine and carbamoyl phosphate: step 1/3. Its function is as follows. Reversibly catalyzes the transfer of the carbamoyl group from carbamoyl phosphate (CP) to the N(epsilon) atom of ornithine (ORN) to produce L-citrulline. This is Ornithine carbamoyltransferase from Brucella suis biovar 1 (strain 1330).